A 52-amino-acid polypeptide reads, in one-letter code: UPF0391 membrane protein XOO4217 (52 aa).

2 consecutive transmembrane segments (helical) span residues 5–25 (AMIFFVIAIIAAVLGFSGIAG) and 27–47 (ATNIAWILFVVFLILAVISMF).

Belongs to the UPF0391 family.

It is found in the cell membrane. The sequence is that of UPF0391 membrane protein XOO4217 from Xanthomonas oryzae pv. oryzae (strain KACC10331 / KXO85).